The following is a 444-amino-acid chain: Homogentisate 1,2-dioxygenase (444 aa).

The Proton acceptor role is filled by His298. Positions 341 and 347 each coordinate Fe cation. 2 residues coordinate homogentisate: Tyr356 and His377. His377 contributes to the Fe cation binding site.

The protein belongs to the homogentisate dioxygenase family. In terms of assembly, hexamer; dimer of trimers. Fe cation is required as a cofactor.

The catalysed reaction is homogentisate + O2 = 4-maleylacetoacetate + H(+). The protein operates within amino-acid degradation; L-phenylalanine degradation; acetoacetate and fumarate from L-phenylalanine: step 4/6. Involved in the catabolism of homogentisate (2,5-dihydroxyphenylacetate or 2,5-OH-PhAc), a central intermediate in the degradation of phenylalanine and tyrosine. Catalyzes the oxidative ring cleavage of the aromatic ring of homogentisate to yield maleylacetoacetate. The protein is Homogentisate 1,2-dioxygenase of Burkholderia orbicola (strain MC0-3).